The chain runs to 347 residues: UDP-3-O-acylglucosamine N-acyltransferase (347 aa).

His-248 acts as the Proton acceptor in catalysis.

It belongs to the transferase hexapeptide repeat family. LpxD subfamily. Homotrimer.

The catalysed reaction is a UDP-3-O-[(3R)-3-hydroxyacyl]-alpha-D-glucosamine + a (3R)-hydroxyacyl-[ACP] = a UDP-2-N,3-O-bis[(3R)-3-hydroxyacyl]-alpha-D-glucosamine + holo-[ACP] + H(+). Its pathway is bacterial outer membrane biogenesis; LPS lipid A biosynthesis. In terms of biological role, catalyzes the N-acylation of UDP-3-O-acylglucosamine using 3-hydroxyacyl-ACP as the acyl donor. Is involved in the biosynthesis of lipid A, a phosphorylated glycolipid that anchors the lipopolysaccharide to the outer membrane of the cell. The chain is UDP-3-O-acylglucosamine N-acyltransferase from Parasynechococcus marenigrum (strain WH8102).